The primary structure comprises 256 residues: MNNIWWQTKGQGNVHLVLLHGWGLNAEVWRCIDEELSSHFTLHLVDLPGFGRSRGFGAMSLADMAEAVLRQAPDKAIWLGWSLGGLVASQIALTHPERVQALVTVASSPCFSARDEWPGIKPDVLAGFQQQLSDDFQRTVERFLALQTMGTETARQDARALKKTVLALPMPEVDVLNGGLEILKTVDLRQPLQNVSMPFLRLYGYLDGLVPRKVVPMLDKLWPHSESYIFAKAAHAPFISHPAEFCRMLVALKQRV.

Residues 15 to 242 (HLVLLHGWGL…AAHAPFISHP (228 aa)) form the AB hydrolase-1 domain. Residues Trp-22, 82-83 (SL), and 143-147 (FLALQ) contribute to the substrate site. The active-site Nucleophile is the Ser-82. Residues Asp-207 and His-235 contribute to the active site. His-235 serves as a coordination point for substrate.

The protein belongs to the AB hydrolase superfamily. Carboxylesterase BioH family. In terms of assembly, monomer.

The protein localises to the cytoplasm. The catalysed reaction is 6-carboxyhexanoyl-[ACP] methyl ester + H2O = 6-carboxyhexanoyl-[ACP] + methanol + H(+). It participates in cofactor biosynthesis; biotin biosynthesis. In terms of biological role, the physiological role of BioH is to remove the methyl group introduced by BioC when the pimeloyl moiety is complete. It allows to synthesize pimeloyl-ACP via the fatty acid synthetic pathway through the hydrolysis of the ester bonds of pimeloyl-ACP esters. This Escherichia coli (strain SMS-3-5 / SECEC) protein is Pimeloyl-[acyl-carrier protein] methyl ester esterase.